A 786-amino-acid polypeptide reads, in one-letter code: LPS-assembly protein LptD (786 aa).

A signal peptide spans 1 to 39 (MPPKPLFPNVFPGDGAPRKRRLALALLAVPGLVPAVSYA). Residues 767-786 (PGYTPLPPPPPPMSRFSNYE) form a disordered region. Over residues 770–779 (TPLPPPPPPM) the composition is skewed to pro residues.

This sequence belongs to the LptD family. As to quaternary structure, component of the lipopolysaccharide transport and assembly complex. Interacts with LptE and LptA.

It localises to the cell outer membrane. Functionally, together with LptE, is involved in the assembly of lipopolysaccharide (LPS) at the surface of the outer membrane. The polypeptide is LPS-assembly protein LptD (Burkholderia cenocepacia (strain HI2424)).